Here is a 274-residue protein sequence, read N- to C-terminus: Nitrate import ATP-binding protein NrtD (274 aa).

The ABC transporter domain maps to leucine 17 to glutamate 250. Position 53 to 60 (glycine 53 to serine 60) interacts with ATP.

This sequence belongs to the ABC transporter superfamily. Nitrate/nitrite/cyanate uptake transporter (NitT) (TC 3.A.1.16) family. In terms of assembly, the complex is composed of two ATP-binding proteins (NrtC and NrtD), two transmembrane proteins (NrtB) and a solute-binding protein (NrtA).

It is found in the cell inner membrane. The enzyme catalyses nitrate(out) + ATP + H2O = nitrate(in) + ADP + phosphate + H(+). In terms of biological role, part of the ABC transporter complex NrtABCD involved in nitrate uptake. The complex is probably also involved in nitrite transport. Probably responsible for energy coupling to the transport system. The sequence is that of Nitrate import ATP-binding protein NrtD from Synechococcus elongatus (strain ATCC 33912 / PCC 7942 / FACHB-805) (Anacystis nidulans R2).